The following is a 211-amino-acid chain: Abscisic acid receptor PYL7 (211 aa).

The START-like stretch occupies residues 29-180 (HHCRENQCTS…NLKSLACVSE (152 aa)). Disulfide bonds link C31-C161 and C36-C161. Abscisate is bound by residues K65, 93 to 98 (ATTSTE), 120 to 126 (RLKNYSS), and E145. Positions 89–93 (SGLPA) match the Gate loop motif. The short motif at 119–121 (HRL) is the Latch loop element.

The protein belongs to the PYR/PYL/RCAR abscisic acid intracellular receptor family. In terms of assembly, homodimer. Binds ABA on one subunit only. Binds to CARs protein in an ABA-independent manner, both at the plasma membrane and in the nucleus. Interacts with ABI1, and possibly with other PP2Cs.

The protein localises to the cytoplasm. Its subcellular location is the nucleus. The protein resides in the cell membrane. In terms of biological role, receptor for abscisic acid (ABA) required for ABA-mediated responses such as stomatal closure and germination inhibition. Inhibits the activity of group-A protein phosphatases type 2C (PP2Cs) when activated by ABA. The sequence is that of Abscisic acid receptor PYL7 (PYL7) from Arabidopsis thaliana (Mouse-ear cress).